The sequence spans 309 residues: MILTVTLNPAIDVSYPLDELKCDTVNRVVDVTKTPGGKGLNVCRVLNEFGETVKATGCIGGESGDFIINHLPDSILSRFYKISGYTRTCIAILHEGNQTEILEKGPMLSVDEIDGFTHHFKYLLNDVDVVTLSGSLPAGMPDDYYQKLIGIANLNGKKTVLDCSGNALEAVLKGDSKPTVIKPNLEELSQLLGKEMTKDFKALKAVLQDELFEGIEWIIVSLGADGVFAKHKDTFYNVDIPKIKIVSAVGSGDSTVAGIASGLANDEDDRALLTKANVLGMLNAQEKTTGHVNMANYDKLYQSIKVKEV.

The protein belongs to the carbohydrate kinase PfkB family. LacC subfamily.

The enzyme catalyses D-tagatofuranose 6-phosphate + ATP = D-tagatofuranose 1,6-bisphosphate + ADP + H(+). It functions in the pathway carbohydrate metabolism; D-tagatose 6-phosphate degradation; D-glyceraldehyde 3-phosphate and glycerone phosphate from D-tagatose 6-phosphate: step 1/2. The protein is Tagatose-6-phosphate kinase of Streptococcus pyogenes serotype M3 (strain SSI-1).